A 106-amino-acid polypeptide reads, in one-letter code: Met repressor (106 aa).

Belongs to the MetJ family. In terms of assembly, homodimer.

It localises to the cytoplasm. This regulatory protein, when combined with SAM (S-adenosylmethionine) represses the expression of the methionine regulon and of enzymes involved in SAM synthesis. The protein is Met repressor of Vibrio campbellii (strain ATCC BAA-1116).